Consider the following 126-residue polypeptide: UPF0102 protein plu4003 (126 aa).

The protein belongs to the UPF0102 family.

This chain is UPF0102 protein plu4003, found in Photorhabdus laumondii subsp. laumondii (strain DSM 15139 / CIP 105565 / TT01) (Photorhabdus luminescens subsp. laumondii).